The following is an 877-amino-acid chain: Potassium transporter 23 (877 aa).

2 disordered regions span residues 1–60 (MDDD…SLDG) and 72–92 (ASAGGASGGGGGGGPLSRASS). At 1–126 (MDDDDSGIQE…RGAHGHSSKE (126 aa)) the chain is on the cytoplasmic side. The segment covering 12–28 (PAPPPPPPPPPPPPPPL) has biased composition (pro residues). The segment covering 76-86 (GASGGGGGGGP) has biased composition (gly residues). Residues 127–147 (ISMLSTVAMAFQTLGVVYGDM) form a helical membrane-spanning segment. Residues 148-173 (GTSPLYVFSDVFSKVPIKSEVEILGA) are Extracellular-facing. Residues 174–194 (LSLVMYTIALIPFAKYVFIVL) traverse the membrane as a helical segment. Residues 195–260 (KANDNGEGGT…SLEKNPVFKN (66 aa)) lie on the Cytoplasmic side of the membrane. The helical transmembrane segment at 261-281 (ILLFLVLMGTSMVIGDGILTP) threads the bilayer. Residues 282–295 (SMSVMSAVSGLQGR) lie on the Extracellular side of the membrane. The helical transmembrane segment at 296 to 316 (VPGFGTDAVVIVSILFLVLLF) threads the bilayer. The Cytoplasmic portion of the chain corresponds to 317–325 (SVQRFGTGK). A helical membrane pass occupies residues 326–346 (VGFMFAPILALWFINLGTIGI). Topologically, residues 347-379 (YNLAKYDISVVRAFNPVYIYLFFQTNGIKAWSA) are extracellular. A helical transmembrane segment spans residues 380–400 (LGGCVLCITGAEAMFADLGHF). The Cytoplasmic portion of the chain corresponds to 401–406 (SVKSIQ). The chain crosses the membrane as a helical span at residues 407 to 427 (VAFTAVVFPCLLIAYMGQAAY). At 428-441 (LMKYPFAVERIFYD) the chain is on the extracellular side. Residues 442 to 462 (SVPEILFWPVFVIATLAAMIA) traverse the membrane as a helical segment. Topologically, residues 463–498 (SQAMISATFSCIKQAMALGCFPRIKIIHTSKKVMGQ) are cytoplasmic. The helical transmembrane segment at 499 to 519 (IYIPVMNWFLMVMCIIIVATF) threads the bilayer. The Extracellular portion of the chain corresponds to 520 to 524 (RSTND). The helical transmembrane segment at 525 to 545 (IANAYGIAEVGVMMVSTALVT) threads the bilayer. At 546 to 555 (LVMLLIWQTN) the chain is on the cytoplasmic side. A helical transmembrane segment spans residues 556 to 578 (LFLVMCFPVIFGSVEFVYLTAVL). The Extracellular segment spans residues 579-583 (SKIQE). The helical transmembrane segment at 584-604 (GGWLPLAFSSLFLCIMYTWNY) threads the bilayer. Residues 605-877 (GSVLKYQSEM…IMRVGMTYMV (273 aa)) are Cytoplasmic-facing.

It belongs to the HAK/KUP transporter (TC 2.A.72.3) family.

It localises to the membrane. High-affinity potassium transporter. The chain is Potassium transporter 23 (HAK23) from Oryza sativa subsp. japonica (Rice).